Reading from the N-terminus, the 365-residue chain is Putative glutamate--cysteine ligase 2-3 (365 aa).

Belongs to the glutamate--cysteine ligase type 2 family. YbdK subfamily.

It carries out the reaction L-cysteine + L-glutamate + ATP = gamma-L-glutamyl-L-cysteine + ADP + phosphate + H(+). Its function is as follows. ATP-dependent carboxylate-amine ligase which exhibits weak glutamate--cysteine ligase activity. The polypeptide is Putative glutamate--cysteine ligase 2-3 (Mycolicibacterium smegmatis (strain ATCC 700084 / mc(2)155) (Mycobacterium smegmatis)).